The primary structure comprises 596 residues: Elongation factor 4 (596 aa).

The tr-type G domain maps to 2–184; the sequence is DHIRNFSIIA…AVVARIPPPK (183 aa). GTP is bound by residues 14–19 and 131–134; these read DHGKST and NKID.

Belongs to the TRAFAC class translation factor GTPase superfamily. Classic translation factor GTPase family. LepA subfamily.

It is found in the cell inner membrane. The enzyme catalyses GTP + H2O = GDP + phosphate + H(+). Its function is as follows. Required for accurate and efficient protein synthesis under certain stress conditions. May act as a fidelity factor of the translation reaction, by catalyzing a one-codon backward translocation of tRNAs on improperly translocated ribosomes. Back-translocation proceeds from a post-translocation (POST) complex to a pre-translocation (PRE) complex, thus giving elongation factor G a second chance to translocate the tRNAs correctly. Binds to ribosomes in a GTP-dependent manner. The protein is Elongation factor 4 of Dechloromonas aromatica (strain RCB).